The following is a 398-amino-acid chain: L-rhamnonate dehydratase (398 aa).

2 residues coordinate substrate: His-22 and Arg-48. Mg(2+)-binding residues include Asp-214, Glu-241, and Glu-269. His-319 (proton acceptor) is an active-site residue. Glu-339 contributes to the substrate binding site.

Belongs to the mandelate racemase/muconate lactonizing enzyme family. RhamD subfamily. Homooctamer; tetramer of dimers. The cofactor is Mg(2+).

It carries out the reaction L-rhamnonate = 2-dehydro-3-deoxy-L-rhamnonate + H2O. Functionally, catalyzes the dehydration of L-rhamnonate to 2-keto-3-deoxy-L-rhamnonate (KDR). The polypeptide is L-rhamnonate dehydratase (Verminephrobacter eiseniae (strain EF01-2)).